Here is a 368-residue protein sequence, read N- to C-terminus: MHPDVSADLSELDTTLRTVESVLDVEELRRRIDELEHQAADPELWNDQEHAQQVTSQLSHSQAELRRVEELRTRLDDMPVLYELAEDEGADAIADADAERHSLREDIAAMEVKTMLSGEYDERDALVNIRSGAGGVDAADWAEMLMRMYVRWAEKHGYGVEVYDTSYAEEAGIKSATFAVKAPYSYGTLSVEMGTHRLVRISPFDNQGRRQTSFAEVEVLPVVETTDHIDVNENDVRVDVYRSSGPGGQSVNTTDSAVRLTHIPTGIVVTCQNEKSQLQNKVSAMRVLQAKLLEVKRKEERAEMDALKGDGGSSWGNQMRSYVLHPYQMVKDLRTEYEVNNPSAVLDGDIDGFLESGIRWRMRENQAS.

Gln-249 carries the N5-methylglutamine modification.

Belongs to the prokaryotic/mitochondrial release factor family. Post-translationally, methylated by PrmC. Methylation increases the termination efficiency of RF2.

It localises to the cytoplasm. Functionally, peptide chain release factor 2 directs the termination of translation in response to the peptide chain termination codons UGA and UAA. In Rhodococcus jostii (strain RHA1), this protein is Peptide chain release factor 2.